The sequence spans 80 residues: MAERSQNLQDLFLNTVRKQKISLTIFLINGVKLTGVVTSFDNFCVLLRRDGHSQLVYKHAISTIMPGQPMQMFESEEVAS.

The region spanning 10–70 is the Sm domain; sequence DLFLNTVRKQ…ISTIMPGQPM (61 aa).

It belongs to the Hfq family. Homohexamer.

Its function is as follows. RNA chaperone that binds small regulatory RNA (sRNAs) and mRNAs to facilitate mRNA translational regulation in response to envelope stress, environmental stress and changes in metabolite concentrations. Also binds with high specificity to tRNAs. This Rhizobium rhizogenes (strain K84 / ATCC BAA-868) (Agrobacterium radiobacter) protein is RNA-binding protein Hfq.